The chain runs to 123 residues: Defensin beta 118 (123 aa).

Residues 1–19 (MKLLLLALPILVLLPQVIP) form the signal peptide. 3 disulfide bridges follow: Cys27–Cys54, Cys34–Cys48, and Cys38–Cys55. Positions 65-123 (LPTTSPTPLSDSTPGIIDNILTIRFTTDYFEISSKKDMVEESEAGQGTQTSPPNVHHTS) are excised as a propeptide. Positions 100–123 (KDMVEESEAGQGTQTSPPNVHHTS) are disordered. The segment covering 109–123 (GQGTQTSPPNVHHTS) has biased composition (polar residues).

The protein belongs to the beta-defensin family. In terms of processing, the three-dimensional structure formed by the three intramolecular disulfide bridges is indispensable for antimicrobial activity. As to expression, high-level and epididymis-specific expression. Most abundant in the epithelium of the caput and is also present in the lumen and bound to sperm.

It is found in the secreted. Host defense peptide that exhibits antimicrobial activity against both Gram-negative bacteria, such as E.coli and S.typhimurium, and Gram-positive bacteria, such as S.aureus and B.subtilis. Inhibits cell adhesion of E.coli on intestinal epithelial enterocytes. Causes rapid permeabilization of both the outer and inner membrane of E.coli, leading to morphological alterations on the bacterial surface. Binds to bacterial lipopolysaccharides (LPS) with high affinity, and may thereby be involved in immunoregulation through LPS neutralization. May contribute to epididymal innate immunity and protect the sperm against attack by microorganisms. The protein is Defensin beta 118 (DEFB118) of Macaca mulatta (Rhesus macaque).